Reading from the N-terminus, the 431-residue chain is Tryptophan--tRNA ligase (431 aa).

Residues 12-14 (TPS) and 20-21 (GN) each bind ATP. A 'HIGH' region motif is present at residues 13–21 (PSGTPHLGN). Residue Asp145 coordinates L-tryptophan. Residues 157–159 (GRD), Leu197, and 204–208 (KMSKS) contribute to the ATP site. Positions 204 to 208 (KMSKS) match the 'KMSKS' region motif.

The protein belongs to the class-I aminoacyl-tRNA synthetase family. As to quaternary structure, homodimer.

It is found in the cytoplasm. The enzyme catalyses tRNA(Trp) + L-tryptophan + ATP = L-tryptophyl-tRNA(Trp) + AMP + diphosphate + H(+). Its function is as follows. Catalyzes the attachment of tryptophan to tRNA(Trp). This is Tryptophan--tRNA ligase from Xanthomonas campestris pv. campestris (strain ATCC 33913 / DSM 3586 / NCPPB 528 / LMG 568 / P 25).